Here is a 495-residue protein sequence, read N- to C-terminus: ATP synthase subunit beta, chloroplastic (495 aa).

172 to 179 (GGAGVGKT) contributes to the ATP binding site.

Belongs to the ATPase alpha/beta chains family. F-type ATPases have 2 components, CF(1) - the catalytic core - and CF(0) - the membrane proton channel. CF(1) has five subunits: alpha(3), beta(3), gamma(1), delta(1), epsilon(1). CF(0) has four main subunits: a(1), b(1), b'(1) and c(9-12).

The protein resides in the plastid. It localises to the chloroplast thylakoid membrane. The enzyme catalyses ATP + H2O + 4 H(+)(in) = ADP + phosphate + 5 H(+)(out). Produces ATP from ADP in the presence of a proton gradient across the membrane. The catalytic sites are hosted primarily by the beta subunits. This is ATP synthase subunit beta, chloroplastic from Convallaria majalis (Lily of the valley).